Consider the following 387-residue polypeptide: F420-dependent formate dehydrogenase 1 subunit beta (387 aa).

2 consecutive 4Fe-4S ferredoxin-type domains span residues 275 to 298 and 326 to 355; these read TIEEWNRQWNKCIKCYGCRDVCPV and VRMSHMAFSCVNCGQCEDVCPMEIPVARIF. Positions 286, 289, 292, 296, 335, 338, 341, and 345 each coordinate [4Fe-4S] cluster. The disordered stretch occupies residues 366–387; that stretch reads LGYRPGVDDEAPPALGGSCPTQ.

This sequence belongs to the FrhB family. Dimer of an alpha (FdhA1) and a beta (FdhB1) subunit. [4Fe-4S] cluster is required as a cofactor. FAD serves as cofactor. The cofactor is Zn(2+).

The enzyme catalyses oxidized coenzyme F420-(gamma-L-Glu)(n) + formate + 2 H(+) = reduced coenzyme F420-(gamma-L-Glu)(n) + CO2. Functionally, catalyzes the oxidation of formate to carbon dioxide, with coenzyme F420 as the electron acceptor. In vitro can also use methyl viologen as electron acceptor. This chain is F420-dependent formate dehydrogenase 1 subunit beta, found in Methanococcus maripaludis (strain DSM 14266 / JCM 13030 / NBRC 101832 / S2 / LL).